Reading from the N-terminus, the 211-residue chain is Ribosome maturation factor RimM (211 aa).

The PRC barrel domain occupies 111–182; that stretch reads PDAWYDHQLV…TLVVTPPLGL (72 aa). A disordered region spans residues 184–211; it reads EEIPDETPTAEPTPAEAAEPAPEGDDAR. Residues 189–204 show a composition bias toward low complexity; sequence ETPTAEPTPAEAAEPA.

It belongs to the RimM family. In terms of assembly, binds ribosomal protein uS19.

The protein localises to the cytoplasm. An accessory protein needed during the final step in the assembly of 30S ribosomal subunit, possibly for assembly of the head region. Essential for efficient processing of 16S rRNA. May be needed both before and after RbfA during the maturation of 16S rRNA. It has affinity for free ribosomal 30S subunits but not for 70S ribosomes. The protein is Ribosome maturation factor RimM of Clavibacter michiganensis subsp. michiganensis (strain NCPPB 382).